The following is a 214-amino-acid chain: MAYIVGLTGGIGSGKSTIADLFMELGVPVVDADEVSRRLVEKGSPLLSKIATHFGADILTNGGELNRSKLREIIFNRPEQKNWLNALLHPAINEEMQRQLQAQQAPYVLFVVPLLIENNLMSLCDRILIIDVSPQTQLERATKRDKNQRELIQQIMNSQVSREKRLTFADDIINNDEDFAQNGDRIKQKVLELHQRYLQLAQQKSSTYDNKNDR.

A DPCK domain is found at 4-204 (IVGLTGGIGS…QRYLQLAQQK (201 aa)). 12–17 (GSGKST) is a binding site for ATP.

This sequence belongs to the CoaE family.

Its subcellular location is the cytoplasm. The enzyme catalyses 3'-dephospho-CoA + ATP = ADP + CoA + H(+). The protein operates within cofactor biosynthesis; coenzyme A biosynthesis; CoA from (R)-pantothenate: step 5/5. Functionally, catalyzes the phosphorylation of the 3'-hydroxyl group of dephosphocoenzyme A to form coenzyme A. This is Dephospho-CoA kinase from Mannheimia succiniciproducens (strain KCTC 0769BP / MBEL55E).